Reading from the N-terminus, the 823-residue chain is Apoptosis-resistant E3 ubiquitin protein ligase 1 (823 aa).

A Filamin repeat occupies 52 to 158 (GNYLDPRSCK…VAYSPYYKIF (107 aa)). The interval 315–345 (PPMHMTSSQRRPSTAVDEEDEDSPSECHTPE) is disordered. Positions 483–789 (SISDWSKNFE…THSTLPTAHT (307 aa)) are interaction with SOCS2. The 341-residue stretch at 483–823 (SISDWSKNFE…SEGCEGFGML (341 aa)) folds into the HECT domain. Cys790 acts as the Glycyl thioester intermediate in catalysis.

In terms of assembly, interacts with SOCS2. Interacts (via HECT domain) with HTRA2, DIABLO/SMAC and SEPTIN4; in the cytoplasm following induction of apoptosis. Autoubiquitinated in vitro in the presence of E2 enzyme UBE2D1/UBCH5A.

The catalysed reaction is S-ubiquitinyl-[E2 ubiquitin-conjugating enzyme]-L-cysteine + [acceptor protein]-L-lysine = [E2 ubiquitin-conjugating enzyme]-L-cysteine + N(6)-ubiquitinyl-[acceptor protein]-L-lysine.. Its pathway is protein modification; protein ubiquitination. In terms of biological role, E3 ubiquitin-protein ligase that catalyzes 'Lys-11'- or 'Lys-33'-linked polyubiquitin chains, with some preference for 'Lys-33' linkages. E3 ubiquitin-protein ligases accept ubiquitin from an E2 ubiquitin-conjugating enzyme in the form of a thioester and then directly transfers the ubiquitin to targeted substrates. Ubiquitinates SEPTIN4, DIABLO/SMAC and HTRA2 in vitro. Modulates pulmonary inflammation by targeting SOCS2 for ubiquitination and subsequent degradation by the proteasome. This Homo sapiens (Human) protein is Apoptosis-resistant E3 ubiquitin protein ligase 1.